Consider the following 140-residue polypeptide: Profilin-1 (140 aa).

N-acetylalanine is present on A2. S28 is modified (phosphoserine). K54 is covalently cross-linked (Glycyl lysine isopeptide (Lys-Gly) (interchain with G-Cter in SUMO2); alternate). Residue K54 forms a Glycyl lysine isopeptide (Lys-Gly) (interchain with G-Cter in ubiquitin); alternate linkage. S57 is subject to Phosphoserine. At K108 the chain carries N6-acetyllysine. Y129 is modified (phosphotyrosine). S138 carries the phosphoserine; by ROCK1 modification.

This sequence belongs to the profilin family. As to quaternary structure, found in a complex with XPO6, Ran, ACTB and PFN1. Interacts with ACTB. Interacts with VASP. Interacts with HTT. Interacts with SH3BGRL. Occurs in many kinds of cells as a complex with monomeric actin in a 1:1 ratio. Interacts with ACTMAP. In terms of processing, phosphorylation at Ser-138 reduces its affinity for G-actin and blocks its interaction with HTT, reducing its ability to inhibit androgen receptor (AR) and HTT aggregation.

The protein resides in the cytoplasm. It is found in the cytoskeleton. Its function is as follows. Binds to actin and affects the structure of the cytoskeleton. At high concentrations, profilin prevents the polymerization of actin, whereas it enhances it at low concentrations. By binding to PIP2, it inhibits the formation of IP3 and DG. Inhibits androgen receptor (AR) and HTT aggregation and binding of G-actin is essential for its inhibition of AR. This is Profilin-1 (Pfn1) from Mus musculus (Mouse).